A 583-amino-acid polypeptide reads, in one-letter code: Isocitrate dehydrogenase kinase/phosphatase (583 aa).

ATP is bound by residues 315 to 321 (APGIRGM) and Lys-336. Asp-371 is an active-site residue.

The protein belongs to the AceK family.

It is found in the cytoplasm. The catalysed reaction is L-seryl-[isocitrate dehydrogenase] + ATP = O-phospho-L-seryl-[isocitrate dehydrogenase] + ADP + H(+). In terms of biological role, bifunctional enzyme which can phosphorylate or dephosphorylate isocitrate dehydrogenase (IDH) on a specific serine residue. This is a regulatory mechanism which enables bacteria to bypass the Krebs cycle via the glyoxylate shunt in response to the source of carbon. When bacteria are grown on glucose, IDH is fully active and unphosphorylated, but when grown on acetate or ethanol, the activity of IDH declines drastically concomitant with its phosphorylation. This is Isocitrate dehydrogenase kinase/phosphatase from Salmonella dublin (strain CT_02021853).